The sequence spans 154 residues: MFTQANLFLILLLAIALIAKNQSLIIAVSVLLLIKLIGLDQKLFPAIQSKGINWGVTVITIAVLVPIATGEIGFKQLGEAMKSYYAWIALGAGILVALIAKNGITLLAEDPHITTALVFGTILAVALFKGVAVGPLIGAGIAYLVMQAVQHFTS.

Transmembrane regions (helical) follow at residues 8-28, 54-74, 87-107, and 117-137; these read FLILLLAIALIAKNQSLIIAV, WGVTVITIAVLVPIATGEIGF, WIALGAGILVALIAKNGITLL, and LVFGTILAVALFKGVAVGPLI.

This sequence belongs to the UPF0756 family.

The protein resides in the cell membrane. This is UPF0756 membrane protein BLi03063/BL00400 from Bacillus licheniformis (strain ATCC 14580 / DSM 13 / JCM 2505 / CCUG 7422 / NBRC 12200 / NCIMB 9375 / NCTC 10341 / NRRL NRS-1264 / Gibson 46).